A 165-amino-acid chain; its full sequence is Endoribonuclease YbeY (165 aa).

The Zn(2+) site is built by His-130, His-134, and His-140.

The protein belongs to the endoribonuclease YbeY family. The cofactor is Zn(2+).

It localises to the cytoplasm. Single strand-specific metallo-endoribonuclease involved in late-stage 70S ribosome quality control and in maturation of the 3' terminus of the 16S rRNA. The protein is Endoribonuclease YbeY of Streptococcus sanguinis (strain SK36).